We begin with the raw amino-acid sequence, 834 residues long: MVMHARKPQRMNDGYFEKHTSHTSYQSSKYSSSKRDYERDRSSNYRDRDLSPGAGGGGGGGSAGGGGGGSGNGGGPLNNGNSYRSQSPDIDSPSSRSHDLRDRSDHRGGGGGNGRGGSGERYSFMQKMRDRDRDVYKKDKYSDKRDRRGNDRDSESSYRTNHDRDRRGGGGSGGGSGKLCSSRENDKRSGSDDRDRDRDRDLRDLRDKRDRGSDRDRDMYKKDKYADKRERSDRGERTARYGDWSEHVSSSGKMYYYNCKTEISQWEKPKEWVDRERNLPRDQHREKDYRDKDRDRDRDDRFSRSTYKHSNSSRDNSRLRWNYDNDGGPPSHRRRLDGRHNDNADMDISGDSTPTSEASYSLSGTPTTHGGGPGGGGPGGGGGSNSDQPMGNALPRLSSHPTANSSASVATGTGATGGLHYGSGTGGGPVTGATMLPTMSGMLNSNSSNSAGGSSSNASSSSLRNSVVGHIGSTSGTTVPTLGSQDPHQHHLNSNAPLPPGAKGKDQALLMRQKMHLGLGVLDVQSHHGVNSVGSVSDGTNHAYNSVNNSVSGSLRDNSVNSPLYMHHSMSPSLNFTKSPIPTIVGHTNNMSIAYTCNPPFGLKATLDGGVMVANASPATPGGNASSGSSGANSSQSIVPGMGPVCGISVITSMGSNSGTLCEGPPTPTQELDLSGSALEQQQLAAAAAAATASSLQLQAAQQAQQQRKLDGTSSATLSSLQSCVSSSGQAANLRGPEISPKLAKYFRADLIAHVTNWHAEVLERQAQKCCEDTHLFGDITCTRICAELKCARSLVRSTEINATLQEQKIMYLRHQIRRIEESKTQNAFMSDDT.

Disordered stretches follow at residues 1–247, 268–411, and 430–504; these read MVMH…WSEH, KPKE…SVAT, and VTGA…GAKG. Residues 22–31 are compositionally biased toward low complexity; the sequence is HTSYQSSKYS. Residues 33 to 50 show a composition bias toward basic and acidic residues; that stretch reads SKRDYERDRSSNYRDRDL. The span at 53 to 77 shows a compositional bias: gly residues; sequence GAGGGGGGGSAGGGGGGSGNGGGPL. A compositionally biased stretch (basic and acidic residues) spans 96–108; it reads RSHDLRDRSDHRG. Over residues 109 to 119 the composition is skewed to gly residues; that stretch reads GGGGNGRGGSG. 3 stretches are compositionally biased toward basic and acidic residues: residues 127–168, 181–246, and 268–303; these read KMRD…DRRG, SSRE…DWSE, and KPKE…DRFS. The 28-residue stretch at 244–271 folds into the WW domain; the sequence is WSEHVSSSGKMYYYNCKTEISQWEKPKE. Composition is skewed to polar residues over residues 304–314 and 350–363; these read RSTYKHSNSSR and GDST…YSLS. Residues 369 to 384 are compositionally biased toward gly residues; the sequence is HGGGPGGGGPGGGGGS. Low complexity-rich tracts occupy residues 402–411 and 431–466; these read TANSSASVAT and TGAT…LRNS. The segment covering 472–496 has biased composition (polar residues); it reads GSTSGTTVPTLGSQDPHQHHLNSNA.

Expressed in adult head and thorax and in larval central nervous system and fat body.

It localises to the nucleus. Its subcellular location is the lysosome. Functionally, acts as a linker between gene transcription and histone H2B monoubiquitination at 'Lys-118'. Regulates the cell-cycle checkpoint activation in response to DNA damage. Positive regulator of amino acid starvation-induced autophagy. Also acts as a negative regulator of basal autophagy. Positively regulates mTor activity. Promotes, in an energy-dependent manner, the assembly of the TTT complex and the RUVBL complex composed of pont and rept into the TTT-RUVBL complex. This leads to dimerization of the mTORC1 complex and its subsequent activation. May negatively regulate the ubiquitin proteasome pathway. Required for habituation, a form of non-associative learning. In Drosophila melanogaster (Fruit fly), this protein is WW domain-containing adapter protein with coiled-coil homolog.